A 309-amino-acid polypeptide reads, in one-letter code: RHOMBOID-like protein 5 (309 aa).

Transmembrane regions (helical) follow at residues 27-47, 113-133, 140-160, 170-190, 200-220, 222-242, and 274-294; these read IPVP…FVTF, IWLH…MCIG, FGFM…SLVS, VSVG…SELI, CTAL…GFLP, VDNS…FVLL, and IFRF…YTKL. The active-site Nucleophile is Ser-175. The active-site Charge relay system is His-227.

It belongs to the peptidase S54 family.

It localises to the membrane. It catalyses the reaction Cleaves type-1 transmembrane domains using a catalytic dyad composed of serine and histidine that are contributed by different transmembrane domains.. Its function is as follows. Probable rhomboid-type serine protease that catalyzes intramembrane proteolysis. May function in reproductive organs maturation. The protein is RHOMBOID-like protein 5 of Arabidopsis thaliana (Mouse-ear cress).